Reading from the N-terminus, the 268-residue chain is Cytochrome c oxidase subunit 3 (268 aa).

The next 7 membrane-spanning stretches (helical) occupy residues 23 to 43 (ILVS…MHGF), 49 to 69 (WVVF…RDII), 88 to 108 (IGFI…FWAF), 141 to 161 (TILL…LLGG), 166 to 186 (TLLG…CQYM), 203 to 223 (VFYF…IMLG), and 246 to 266 (ILYY…FYWW).

It belongs to the cytochrome c oxidase subunit 3 family. As to quaternary structure, component of the cytochrome c oxidase (complex IV, CIV), a multisubunit enzyme composed of a catalytic core of 3 subunits and several supernumerary subunits. The complex exists as a monomer or a dimer and forms supercomplexes (SCs) in the inner mitochondrial membrane with ubiquinol-cytochrome c oxidoreductase (cytochrome b-c1 complex, complex III, CIII).

It is found in the mitochondrion inner membrane. It carries out the reaction 4 Fe(II)-[cytochrome c] + O2 + 8 H(+)(in) = 4 Fe(III)-[cytochrome c] + 2 H2O + 4 H(+)(out). Its function is as follows. Component of the cytochrome c oxidase, the last enzyme in the mitochondrial electron transport chain which drives oxidative phosphorylation. The respiratory chain contains 3 multisubunit complexes succinate dehydrogenase (complex II, CII), ubiquinol-cytochrome c oxidoreductase (cytochrome b-c1 complex, complex III, CIII) and cytochrome c oxidase (complex IV, CIV), that cooperate to transfer electrons derived from NADH and succinate to molecular oxygen, creating an electrochemical gradient over the inner membrane that drives transmembrane transport and the ATP synthase. Cytochrome c oxidase is the component of the respiratory chain that catalyzes the reduction of oxygen to water. Electrons originating from reduced cytochrome c in the intermembrane space (IMS) are transferred via the dinuclear copper A center (CU(A)) of subunit 2 and heme A of subunit 1 to the active site in subunit 1, a binuclear center (BNC) formed by heme A3 and copper B (CU(B)). The BNC reduces molecular oxygen to 2 water molecules using 4 electrons from cytochrome c in the IMS and 4 protons from the mitochondrial matrix. This chain is Cytochrome c oxidase subunit 3 (COX3), found in Yarrowia lipolytica (strain CLIB 122 / E 150) (Yeast).